We begin with the raw amino-acid sequence, 336 residues long: Holliday junction branch migration complex subunit RuvB (336 aa).

Residues 4-184 are large ATPase domain (RuvB-L); the sequence is ADRLISAGTT…FGIVQRLEFY (181 aa). ATP contacts are provided by residues isoleucine 23, arginine 24, glycine 65, lysine 68, threonine 69, threonine 70, 131 to 133, arginine 174, tyrosine 184, and arginine 221; that span reads EDY. Threonine 69 lines the Mg(2+) pocket. Residues 185-255 form a small ATPAse domain (RuvB-S) region; it reads QVPDLQYIVS…IAAQALDMLN (71 aa). The interval 258–336 is head domain (RuvB-H); sequence AEGFDYMDRK…HFGITPPEMP (79 aa). Positions 294, 313, and 318 each coordinate DNA.

It belongs to the RuvB family. As to quaternary structure, homohexamer. Forms an RuvA(8)-RuvB(12)-Holliday junction (HJ) complex. HJ DNA is sandwiched between 2 RuvA tetramers; dsDNA enters through RuvA and exits via RuvB. An RuvB hexamer assembles on each DNA strand where it exits the tetramer. Each RuvB hexamer is contacted by two RuvA subunits (via domain III) on 2 adjacent RuvB subunits; this complex drives branch migration. In the full resolvosome a probable DNA-RuvA(4)-RuvB(12)-RuvC(2) complex forms which resolves the HJ.

It is found in the cytoplasm. The enzyme catalyses ATP + H2O = ADP + phosphate + H(+). The RuvA-RuvB-RuvC complex processes Holliday junction (HJ) DNA during genetic recombination and DNA repair, while the RuvA-RuvB complex plays an important role in the rescue of blocked DNA replication forks via replication fork reversal (RFR). RuvA specifically binds to HJ cruciform DNA, conferring on it an open structure. The RuvB hexamer acts as an ATP-dependent pump, pulling dsDNA into and through the RuvAB complex. RuvB forms 2 homohexamers on either side of HJ DNA bound by 1 or 2 RuvA tetramers; 4 subunits per hexamer contact DNA at a time. Coordinated motions by a converter formed by DNA-disengaged RuvB subunits stimulates ATP hydrolysis and nucleotide exchange. Immobilization of the converter enables RuvB to convert the ATP-contained energy into a lever motion, pulling 2 nucleotides of DNA out of the RuvA tetramer per ATP hydrolyzed, thus driving DNA branch migration. The RuvB motors rotate together with the DNA substrate, which together with the progressing nucleotide cycle form the mechanistic basis for DNA recombination by continuous HJ branch migration. Branch migration allows RuvC to scan DNA until it finds its consensus sequence, where it cleaves and resolves cruciform DNA. This chain is Holliday junction branch migration complex subunit RuvB, found in Shigella flexneri serotype 5b (strain 8401).